Reading from the N-terminus, the 711-residue chain is Ent-copalyl diphosphate synthase 1 (711 aa).

K145 lines the substrate pocket. Mg(2+) is bound by residues D277 and D279. The short motif at 277 to 280 is the DXDD motif element; the sequence is DIDD. K364 lines the substrate pocket.

Belongs to the terpene synthase family. Tpsc subfamily. Requires Mg(2+) as cofactor.

The enzyme catalyses (2E,6E,10E)-geranylgeranyl diphosphate = ent-copalyl diphosphate. The protein operates within secondary metabolite biosynthesis; terpenoid biosynthesis. Involved in the biosynthesis of ent-kaurene diterpenoids natural products such as oridonin, miltiradiene, eriocalyxin B and nezukol, known to exhibit antitumor, anti-inflammatory and antibacterial activities. Catalyzes the conversion of (2E,6E,10E)-geranylgeranyl diphosphate (GGPP) to ent-copalyl diphosphate (ent-CPP). In Isodon japonicus (Scutellaria japonica), this protein is Ent-copalyl diphosphate synthase 1.